The primary structure comprises 554 residues: Intraflagellar transport protein 56 (554 aa).

The segment at 1–23 (MMLSRAKPAVGNEVQQIDKKKKK) is disordered. TPR repeat units follow at residues 57–90 (EDTE…EGCN), 92–125 (DVWV…LQNR), 151–184 (IEDQ…NRDF), and 468–501 (ANDC…EGKR).

It belongs to the IFT56 family. As to quaternary structure, component of the IFT complex B.

The protein resides in the cell projection. Its subcellular location is the cilium. Functionally, component of the intraflagellar transport (IFT) complex B required for transport of proteins in the motile cilium. Required for transport of specific ciliary cargo proteins related to motility, while it is neither required for IFT complex B assembly or motion nor for cilium assembly. Plays a key role in maintaining the integrity of the IFT complex B and the proper ciliary localization of the IFT complex B components. Essential for maintaining proper microtubule organization within the ciliary axoneme. The polypeptide is Intraflagellar transport protein 56 (Xenopus tropicalis (Western clawed frog)).